The sequence spans 222 residues: Charged multivesicular body protein 2a (222 aa).

Methionine 1 carries the N-acetylmethionine modification. The stretch at 12–53 (EELLRQNQRALNRAMRELDRERQKLETQEKKIIADIKKMAKQ) forms a coiled coil. Residues 56 to 222 (MDAVRIMAKD…EERLKNLRRD (167 aa)) form an interaction with VPS4B region. Serine 184 is subject to Phosphoserine. Position 185 is a phosphothreonine (threonine 185). 3 positions are modified to phosphoserine: serine 188, serine 190, and serine 203. Residues 195 to 222 (GKKAEAAASALADADADLEERLKNLRRD) are a coiled coil. The MIT-interacting motif motif lies at 210–220 (ADLEERLKNLR). The tract at residues 217 to 222 (KNLRRD) is interaction with VTA1.

It belongs to the SNF7 family. Probable core component of the endosomal sorting required for transport complex III (ESCRT-III). ESCRT-III components are thought to multimerize to form a flat lattice on the perimeter membrane of the endosome. Several assembly forms of ESCRT-III may exist that interact and act sequentially. In vitro, heteromerizes with CHMP3 (but not CHMP4) to form helical tubular structures that expose membrane-interacting sites on the outside whereas VPS4B can associate on the inside of the tubule. Interacts with CHMP1B, CHMP2B, CHMP3, CHMP4A, CHMP4B, CHMP4C and CHMP5. Interacts with VPS4A; the interaction is direct. Interacts with VPS4B; the interaction is direct. Interacts with MITD1. Interacts with VTA1; the interaction probably involves the open conformation of CHMP2A. Post-translationally, ISGylated in a CHMP5-dependent manner. Isgylation weakens and inhibits its interactions with VPS4A and VTA1 respectively.

The protein localises to the late endosome membrane. It localises to the nucleus envelope. In terms of biological role, probable core component of the endosomal sorting required for transport complex III (ESCRT-III) which is involved in multivesicular bodies (MVBs) formation and sorting of endosomal cargo proteins into MVBs. MVBs contain intraluminal vesicles (ILVs) that are generated by invagination and scission from the limiting membrane of the endosome and mostly are delivered to lysosomes enabling degradation of membrane proteins, such as stimulated growth factor receptors, lysosomal enzymes and lipids. The MVB pathway appears to require the sequential function of ESCRT-O, -I,-II and -III complexes. ESCRT-III proteins mostly dissociate from the invaginating membrane before the ILV is released. The ESCRT machinery also functions in topologically equivalent membrane fission events, such as the terminal stages of cytokinesis. Together with SPAST, the ESCRT-III complex promotes nuclear envelope sealing and mitotic spindle disassembly during late anaphase. Recruited to the reforming nuclear envelope (NE) during anaphase by LEMD2. ESCRT-III proteins are believed to mediate the necessary vesicle extrusion and/or membrane fission activities, possibly in conjunction with the AAA ATPase VPS4. (Microbial infection) The ESCRT machinery functions in topologically equivalent membrane fission events, such as the budding of enveloped viruses (HIV-1 and other lentiviruses). Involved in HIV-1 p6- and p9-dependent virus release. This Homo sapiens (Human) protein is Charged multivesicular body protein 2a (CHMP2A).